The following is a 125-amino-acid chain: UPF0763 protein NAMH_0545 (125 aa).

The protein belongs to the UPF0763 family.

The sequence is that of UPF0763 protein NAMH_0545 from Nautilia profundicola (strain ATCC BAA-1463 / DSM 18972 / AmH).